The sequence spans 325 residues: MDQQGMVKKRLAVLVGCNYPNTRNELHGCINDVLAMKETILSRFGFKQDDIEVLTDEPESKVKPTGANIKAALRRMVDKAQAGSGDILFFHYSGHGTRIPSVKSAHPFKQDEAIVPCDFNLITDVDFRELVNQLPKGTSFTMISDSCHSGGLIDKEKEQIGPSSVSSNISPAIETTNKTITSRALPFKAVLDHLSSLTGITTSDIGTHLLELFGRDAGLKFRLPAMDLMDLLETMTAREKHVDSGILMSGCQADETSADVGVGNGKAYGAFSNAIQRVLNENEGAMKNKQLVMMARDVLERLGFHQHPCLYCSDQNADATFLSQP.

Residues His95 and Cys147 contribute to the active site. Cys147 carries the S-nitrosocysteine modification. Asn177 carries N-linked (GlcNAc...) asparagine glycosylation.

It belongs to the peptidase C14B family. Post-translationally, the two subunits are derived from the precursor sequence by an autocatalytic mechanism. S-nitrosylation at Cys-147 suppresses both autoprocessing and proteolytic activity of the full-length protein, but does not affect the activity of the mature processed form. In terms of tissue distribution, expressed in root tips, cauline leaves, flowers and siliques.

Its subcellular location is the secreted. It is found in the extracellular space. It localises to the apoplast. Inhibited by serpin ZX and nitric oxide through cysteine nitrosylation. Its function is as follows. Cysteine protease that cleaves specifically after arginine or lysine residues. Does not cleave caspase-specific substrates. Required for proteolytic processing of GRI. The sequence is that of Metacaspase-9 (AMC9) from Arabidopsis thaliana (Mouse-ear cress).